We begin with the raw amino-acid sequence, 219 residues long: Proteasome subunit beta (219 aa).

Positions 1–14 (MISNSEYHKEYMKG) are cleaved as a propeptide — removed in mature form; by autocatalysis. Thr-15 serves as the catalytic Nucleophile.

Belongs to the peptidase T1B family. As to quaternary structure, the 20S proteasome core is composed of 14 alpha and 14 beta subunits that assemble into four stacked heptameric rings, resulting in a barrel-shaped structure. The two inner rings, each composed of seven catalytic beta subunits, are sandwiched by two outer rings, each composed of seven alpha subunits. The catalytic chamber with the active sites is on the inside of the barrel. Has a gated structure, the ends of the cylinder being occluded by the N-termini of the alpha-subunits. Is capped at one or both ends by the proteasome regulatory ATPase, PAN.

The protein resides in the cytoplasm. It carries out the reaction Cleavage of peptide bonds with very broad specificity.. Its activity is regulated as follows. The formation of the proteasomal ATPase PAN-20S proteasome complex, via the docking of the C-termini of PAN into the intersubunit pockets in the alpha-rings, triggers opening of the gate for substrate entry. Interconversion between the open-gate and close-gate conformations leads to a dynamic regulation of the 20S proteasome proteolysis activity. Its function is as follows. Component of the proteasome core, a large protease complex with broad specificity involved in protein degradation. The protein is Proteasome subunit beta of Methanococcus maripaludis (strain C5 / ATCC BAA-1333).